Reading from the N-terminus, the 211-residue chain is Large ribosomal subunit protein uL4 (211 aa).

A compositionally biased stretch (polar residues) spans 41–52 (QTNARQGTASTK). Residues 41–78 (QTNARQGTASTKTRAEVRGGGRKPWRQKGTGRARAGSI) form a disordered region. A compositionally biased stretch (basic residues) spans 60 to 71 (GGRKPWRQKGTG).

It belongs to the universal ribosomal protein uL4 family. In terms of assembly, part of the 50S ribosomal subunit.

Its function is as follows. One of the primary rRNA binding proteins, this protein initially binds near the 5'-end of the 23S rRNA. It is important during the early stages of 50S assembly. It makes multiple contacts with different domains of the 23S rRNA in the assembled 50S subunit and ribosome. Forms part of the polypeptide exit tunnel. In Rippkaea orientalis (strain PCC 8801 / RF-1) (Cyanothece sp. (strain PCC 8801)), this protein is Large ribosomal subunit protein uL4.